The primary structure comprises 419 residues: Voltage-gated potassium channel subunit beta-1 (419 aa).

A disordered region spans residues 1-52; the sequence is MLAARTGAAGSQISEENTKLRRQSGFSVAGKDKSPKKASENAKDSSLSPSGE. A compositionally biased stretch (basic and acidic residues) spans 30 to 43; sequence GKDKSPKKASENAK. Positions 108, 109, 115, and 137 each coordinate NADP(+). Tyr-142 functions as the Proton donor/acceptor in the catalytic mechanism. 17 residues coordinate NADP(+): Asn-210, Ser-240, Arg-241, Gln-266, Trp-295, Ser-296, Pro-297, Leu-298, Ala-299, Cys-300, Lys-306, Arg-316, Gly-375, Ser-377, Gln-381, Glu-384, and Asn-385.

This sequence belongs to the shaker potassium channel beta subunit family. Homotetramer. Interaction with tetrameric potassium channel alpha subunits gives rise to a heterooctamer. Identified in potassium channel complexes containing KCNA1, KCNA2, KCNA4, KCNA5, KCNA6, KCNAB1 and KCNAB2. Part of a complex containing KCNA1, KCNA4 and LGI1; interaction with LGI1 inhibits down-regulation of KCNA1 channel activity. Interacts with the dimer formed by GNB1 and GNG2; this enhances KCNA1 binding. Interacts with SQSTM1. In brain, expression is most prominent in caudate nucleus, hippocampus and thalamus. Significant expression also detected in amygdala and subthalamic nucleus. Also expressed in both healthy and cardiomyopathic heart. Up to four times more abundant in left ventricle than left atrium.

The protein resides in the cytoplasm. The protein localises to the membrane. Its subcellular location is the cell membrane. The enzyme catalyses a primary alcohol + NADP(+) = an aldehyde + NADPH + H(+). The catalysed reaction is a secondary alcohol + NADP(+) = a ketone + NADPH + H(+). Its function is as follows. Regulatory subunit of the voltage-gated potassium (Kv) Shaker channels composed of pore-forming and potassium-conducting alpha subunits and of regulatory beta subunits. The beta-1/KCNAB1 cytoplasmic subunit mediates closure of delayed rectifier potassium channels by physically obstructing the pore via its N-terminal domain and increases the speed of channel closure for other family members. Promotes the inactivation of Kv1.1/KCNA1, Kv1.2/KCNA2, Kv1.4/KCNA4, Kv1.5/KCNA5 and Kv1.6/KCNA6 alpha subunit-containing channels. Displays nicotinamide adenine dinucleotide phosphate (NADPH)-dependent aldoketoreductase activity by catalyzing the NADPH-dependent reduction of a variety of endogenous aldehydes and ketones. The binding of NADPH is required for efficient down-regulation of potassium channel activity. Oxidation of the bound NADPH restrains N-terminal domain from blocking the channel, thereby decreasing N-type inactivation of potassium channel activity. Functionally, isoform KvB1.2 shows no effect on KCNA1, KCNA2 or KCNB1. The protein is Voltage-gated potassium channel subunit beta-1 of Homo sapiens (Human).